Consider the following 120-residue polypeptide: Flagellar transcriptional regulator FlhD (120 aa).

It belongs to the FlhD family. In terms of assembly, homodimer; disulfide-linked. Forms a heterohexamer composed of two FlhC and four FlhD subunits. Each FlhC binds a FlhD dimer, forming a heterotrimer, and a hexamer assembles by dimerization of two heterotrimers.

It localises to the cytoplasm. Its function is as follows. Functions in complex with FlhC as a master transcriptional regulator that regulates transcription of several flagellar and non-flagellar operons by binding to their promoter region. Activates expression of class 2 flagellar genes, including fliA, which is a flagellum-specific sigma factor that turns on the class 3 genes. Also regulates genes whose products function in a variety of physiological pathways. The chain is Flagellar transcriptional regulator FlhD from Erwinia tasmaniensis (strain DSM 17950 / CFBP 7177 / CIP 109463 / NCPPB 4357 / Et1/99).